Reading from the N-terminus, the 380-residue chain is tRNA-specific 2-thiouridylase MnmA (380 aa).

ATP is bound by residues 14-21 and M40; that span reads GLSGGVDS. The interval 100-102 is interaction with target base in tRNA; the sequence is NPD. Catalysis depends on C105, which acts as the Nucleophile. A disulfide bridge links C105 with C203. G129 contributes to the ATP binding site. Positions 153–155 are interaction with tRNA; the sequence is KDQ. The Cysteine persulfide intermediate role is filled by C203. The tract at residues 322-323 is interaction with tRNA; it reads RY.

This sequence belongs to the MnmA/TRMU family.

It localises to the cytoplasm. The enzyme catalyses S-sulfanyl-L-cysteinyl-[protein] + uridine(34) in tRNA + AH2 + ATP = 2-thiouridine(34) in tRNA + L-cysteinyl-[protein] + A + AMP + diphosphate + H(+). Catalyzes the 2-thiolation of uridine at the wobble position (U34) of tRNA, leading to the formation of s(2)U34. This is tRNA-specific 2-thiouridylase MnmA from Leptothrix cholodnii (strain ATCC 51168 / LMG 8142 / SP-6) (Leptothrix discophora (strain SP-6)).